The sequence spans 164 residues: Crossover junction endodeoxyribonuclease RuvC (164 aa).

Catalysis depends on residues aspartate 7, glutamate 67, and aspartate 139. The Mg(2+) site is built by aspartate 7, glutamate 67, and aspartate 139.

The protein belongs to the RuvC family. As to quaternary structure, homodimer which binds Holliday junction (HJ) DNA. The HJ becomes 2-fold symmetrical on binding to RuvC with unstacked arms; it has a different conformation from HJ DNA in complex with RuvA. In the full resolvosome a probable DNA-RuvA(4)-RuvB(12)-RuvC(2) complex forms which resolves the HJ. Mg(2+) is required as a cofactor.

It is found in the cytoplasm. It catalyses the reaction Endonucleolytic cleavage at a junction such as a reciprocal single-stranded crossover between two homologous DNA duplexes (Holliday junction).. Its function is as follows. The RuvA-RuvB-RuvC complex processes Holliday junction (HJ) DNA during genetic recombination and DNA repair. Endonuclease that resolves HJ intermediates. Cleaves cruciform DNA by making single-stranded nicks across the HJ at symmetrical positions within the homologous arms, yielding a 5'-phosphate and a 3'-hydroxyl group; requires a central core of homology in the junction. The consensus cleavage sequence is 5'-(A/T)TT(C/G)-3'. Cleavage occurs on the 3'-side of the TT dinucleotide at the point of strand exchange. HJ branch migration catalyzed by RuvA-RuvB allows RuvC to scan DNA until it finds its consensus sequence, where it cleaves and resolves the cruciform DNA. The protein is Crossover junction endodeoxyribonuclease RuvC of Geobacter metallireducens (strain ATCC 53774 / DSM 7210 / GS-15).